The sequence spans 412 residues: Subtilisin-like protease 6 (412 aa).

A signal peptide spans 1–20 (MGFITKAIPIVLAALSTVNG). The propeptide occupies 21–126 (AKILEAGPHA…VVRTSTNGTN (106 aa)). The 85-residue stretch at 36 to 120 (KYIVVMKREV…YIEPDFVVRT (85 aa)) folds into the Inhibitor I9 domain. N-linked (GlcNAc...) asparagine glycosylation is found at Asn-123 and Asn-126. Residues 135-412 (SWGLARVSSK…SKLIYNGSGK (278 aa)) form the Peptidase S8 domain. Active-site charge relay system residues include Asp-167 and His-198. Residues Asn-252 and Asn-264 are each glycosylated (N-linked (GlcNAc...) asparagine). Ser-358 acts as the Charge relay system in catalysis. Residue Asn-408 is glycosylated (N-linked (GlcNAc...) asparagine).

Belongs to the peptidase S8 family.

Its subcellular location is the secreted. In terms of biological role, secreted subtilisin-like serine protease with keratinolytic activity that contributes to pathogenicity. In Trichophyton equinum (Horse ringworm fungus), this protein is Subtilisin-like protease 6 (SUB6).